Here is a 361-residue protein sequence, read N- to C-terminus: Chorismate synthase (361 aa).

NADP(+) contacts are provided by Arg48 and Arg54. FMN is bound by residues 131 to 133 (RSS), 243 to 244 (NA), Gly287, 302 to 306 (KPTSS), and Arg328.

This sequence belongs to the chorismate synthase family. Homotetramer. FMNH2 serves as cofactor.

It carries out the reaction 5-O-(1-carboxyvinyl)-3-phosphoshikimate = chorismate + phosphate. The protein operates within metabolic intermediate biosynthesis; chorismate biosynthesis; chorismate from D-erythrose 4-phosphate and phosphoenolpyruvate: step 7/7. Its function is as follows. Catalyzes the anti-1,4-elimination of the C-3 phosphate and the C-6 proR hydrogen from 5-enolpyruvylshikimate-3-phosphate (EPSP) to yield chorismate, which is the branch point compound that serves as the starting substrate for the three terminal pathways of aromatic amino acid biosynthesis. This reaction introduces a second double bond into the aromatic ring system. In Rhodopseudomonas palustris (strain BisA53), this protein is Chorismate synthase.